A 548-amino-acid chain; its full sequence is Chaperonin GroEL (548 aa).

Residues T30–P33, K51, D87–T91, G415, N479–A481, and D495 contribute to the ATP site.

Belongs to the chaperonin (HSP60) family. In terms of assembly, forms a cylinder of 14 subunits composed of two heptameric rings stacked back-to-back. Interacts with the co-chaperonin GroES.

The protein resides in the cytoplasm. The catalysed reaction is ATP + H2O + a folded polypeptide = ADP + phosphate + an unfolded polypeptide.. Its function is as follows. Together with its co-chaperonin GroES, plays an essential role in assisting protein folding. The GroEL-GroES system forms a nano-cage that allows encapsulation of the non-native substrate proteins and provides a physical environment optimized to promote and accelerate protein folding. The polypeptide is Chaperonin GroEL (Klebsiella pneumoniae (strain 342)).